The primary structure comprises 1491 residues: Terminal uridylyltransferase 7 (1491 aa).

Threonine 64 is subject to Phosphothreonine. Serine 132 and serine 172 each carry phosphoserine. The disordered stretch occupies residues 165-203; the sequence is MSEMEAGSPENKKQRSRPRKPRRTRTEDSEQDGDLDGPV. Basic residues predominate over residues 178 to 187; sequence QRSRPRKPRR. The Matrin-type zinc finger occupies 244 to 274; the sequence is YTCKLCDALIDSIPFAHKHIKEKRHKKNLKE. One can recognise a PAP-associated 1 domain in the interval 551 to 600; sequence VGQLWVELLRFYALEFNLADLVISIRVKELISRESKDWPKKRIAIEDPYS. A phosphoserine mark is found at serine 600 and serine 747. Disordered stretches follow at residues 740–774 and 834–911; these read AELP…KHPE and QSRT…CGEN. Residues 844–857 are compositionally biased toward acidic residues; the sequence is DDEEEEEEEEEEEE. Residue threonine 865 is modified to Phosphothreonine. Residues 885–897 are compositionally biased toward acidic residues; that stretch reads GEEDALSEEDDLA. Position 891 is a phosphoserine (serine 891). Positions 947–1491 are sufficient for monouridylation activity; the sequence is RKLTFTKGKS…ASVKRTQQES (545 aa). The segment at 959-976 adopts a CCHC-type 1 zinc-finger fold; that stretch reads VVCSLCKREGHLKKDCPE. Residues 1043–1046, 1053–1056, asparagine 1126, lysine 1148, 1166–1170, and histidine 1282 contribute to the UTP site; these read SSKN, SDLD, and SYAYT. Residues aspartate 1054 and aspartate 1056 each coordinate Mg(2+). The region spanning 1230 to 1282 is the PAP-associated 2 domain; that stretch reads VGQLWLGLLRFYTEEFDFKEHVISIRRKSLLTTFKKQWTSKYIVIEDPFDLNH. The CCHC-type 2 zinc-finger motif lies at 1341 to 1358; the sequence is RCCRICGKIGHFMKDCPM. Disordered stretches follow at residues 1362 to 1399 and 1463 to 1491; these read VRRR…EKEV and PQFK…QQES. Residues 1377 to 1399 show a composition bias toward basic and acidic residues; it reads SESKEKRSKEDKEIQNKYTEKEV. Residues 1447 to 1464 form a CCHC-type 3 zinc finger; it reads KRCFICGREGHIKKECPQ. The segment covering 1470–1481 has biased composition (polar residues); that stretch reads GSLSSKYMTQGR.

This sequence belongs to the DNA polymerase type-B-like family. Requires Mg(2+) as cofactor. Mn(2+) serves as cofactor.

The protein resides in the cytoplasm. The catalysed reaction is RNA(n) + UTP = RNA(n)-3'-uridine ribonucleotide + diphosphate. Its function is as follows. Uridylyltransferase that mediates the terminal uridylation of mRNAs with short (less than 25 nucleotides) poly(A) tails, hence facilitating global mRNA decay. Essential for both oocyte maturation and fertility. Through 3' terminal uridylation of mRNA, sculpts, with TUT7, the maternal transcriptome by eliminating transcripts during oocyte growth. Involved in microRNA (miRNA)-induced gene silencing through uridylation of deadenylated miRNA targets. Also acts as a suppressor of miRNA biogenesis by mediating the terminal uridylation of miRNA precursors, including that of let-7 (pre-let-7). Uridylated pre-let-7 RNA is not processed by Dicer and undergo degradation. Pre-let-7 uridylation is strongly enhanced in the presence of LIN28A. Due to functional redundancy between ZCCHC6 and ZCCHC11, the identification of the specific role of each of these proteins is difficult. Involved in microRNA (miRNA)-induced gene silencing through uridylation of deadenylated miRNA targets. Also functions as an integral regulator of microRNA biogenesiS using 3 different uridylation mechanisms. Acts as a suppressor of miRNA biogenesis by mediating the terminal uridylation of some miRNA precursors, including that of let-7 (pre-let-7). Uridylated pre-let-7 RNA is not processed by Dicer and undergo degradation. Pre-let-7 oligouridylation is strongly enhanced in the presence of LIN28A. In the absence of LIN28A, TUT7 and TUT4 monouridylate group II pre-miRNAs, which includes most of pre-let7 members, that shapes an optimal 3' end overhang for efficient processing. Add oligo-U tails to truncated pre-miRNAS with a 5' overhang which may promote rapid degradation of non-functional pre-miRNA species. Does not play a role in replication-dependent histone mRNA degradation. Due to functional redundancy between TUT4 and TUT7, the identification of the specific role of each of these proteins is difficult. TUT4 and TUT7 restrict retrotransposition of long interspersed element-1 (LINE-1) in cooperation with MOV10 counteracting the RNA chaperonne activity of L1RE1. TUT7 uridylates LINE-1 mRNAs in the cytoplasm which inhibits initiation of reverse transcription once in the nucleus, whereas uridylation by TUT4 destabilizes mRNAs in cytoplasmic ribonucleoprotein granules. The sequence is that of Terminal uridylyltransferase 7 from Mus musculus (Mouse).